We begin with the raw amino-acid sequence, 439 residues long: Mitochondrial distribution and morphology protein 12 (439 aa).

Positions Met1 to Val439 constitute an SMP-LTD domain. The segment covering Glu71–Asp84 has biased composition (acidic residues). Disordered stretches follow at residues Glu71–Gln104, Thr182–Lys278, and Tyr362–Asp385. Basic and acidic residues predominate over residues Asp212–His229. The span at Ser230–His255 shows a compositional bias: polar residues. Residues Ser256 to Pro269 show a composition bias toward basic and acidic residues.

It belongs to the MDM12 family. In terms of assembly, component of the ER-mitochondria encounter structure (ERMES) or MDM complex, composed of MMM1, MDM10, MDM12 and MDM34. An MMM1 homodimer associates with one molecule of MDM12 on each side in a pairwise head-to-tail manner, and the SMP-LTD domains of MMM1 and MDM12 generate a continuous hydrophobic tunnel for phospholipid trafficking.

The protein localises to the mitochondrion outer membrane. The protein resides in the endoplasmic reticulum membrane. Its function is as follows. Component of the ERMES/MDM complex, which serves as a molecular tether to connect the endoplasmic reticulum (ER) and mitochondria. Components of this complex are involved in the control of mitochondrial shape and protein biogenesis, and function in nonvesicular lipid trafficking between the ER and mitochondria. MDM12 is required for the interaction of the ER-resident membrane protein MMM1 and the outer mitochondrial membrane-resident beta-barrel protein MDM10. The MDM12-MMM1 subcomplex functions in the major beta-barrel assembly pathway that is responsible for biogenesis of all mitochondrial outer membrane beta-barrel proteins, and acts in a late step after the SAM complex. The MDM10-MDM12-MMM1 subcomplex further acts in the TOM40-specific pathway after the action of the MDM12-MMM1 complex. Essential for establishing and maintaining the structure of mitochondria and maintenance of mtDNA nucleoids. This Uncinocarpus reesii (strain UAMH 1704) protein is Mitochondrial distribution and morphology protein 12.